The following is a 467-amino-acid chain: Cis-zeatin O-glucosyltransferase 1 (467 aa).

H21 functions as the Proton acceptor in the catalytic mechanism. H21 and N91 together coordinate an anthocyanidin. Catalysis depends on D127, which acts as the Charge relay. A343, Q345, H360, W363, N364, S365, E368, D384, and Q385 together coordinate UDP-alpha-D-glucose.

It belongs to the UDP-glycosyltransferase family. As to expression, highly expressed in root. Expressed at lower level in kernel and cob. Weakly expressed in leaves. Weakly or not expressed in stems.

It catalyses the reaction cis-zeatin + UDP-alpha-D-glucose = O-beta-D-glucosyl-cis-zeatin + UDP + H(+). In terms of biological role, utilizes UDP-glucose as the sugar donor and catalyzes the formation of O-beta-D-glucosyl-cis-zeatin from cis-zeatin. May regulate active versus storage forms of cytokinins and could have an impact on seed growth. In Zea mays (Maize), this protein is Cis-zeatin O-glucosyltransferase 1 (CISZOG1).